A 113-amino-acid polypeptide reads, in one-letter code: U11-theraphotoxin-Hhn1n (113 aa).

The N-terminal stretch at 1-21 (MNTVRVTFLLVFVLAVSLGQA) is a signal peptide. Residues 22–74 (DKDENRMEMQEKTEQGKSYLDFAENLLLQKLEELEAKLLEEDSEESRNSRQKR) constitute a propeptide that is removed on maturation. Residues 60–69 (LEEDSEESRN) are compositionally biased toward basic and acidic residues. Residues 60-83 (LEEDSEESRNSRQKRCIGEGVPCD) form a disordered region. Cystine bridges form between cysteine 75–cysteine 90 and cysteine 89–cysteine 110.

This sequence belongs to the neurotoxin 14 (magi-1) family. 01 (HNTX-16) subfamily. Expressed by the venom gland.

The protein resides in the secreted. Functionally, probable ion channel inhibitor. This is U11-theraphotoxin-Hhn1n from Cyriopagopus hainanus (Chinese bird spider).